Consider the following 320-residue polypeptide: Cytochrome f (320 aa).

Positions 1-35 are cleaved as a signal peptide; sequence MKLNSLINLIQKSIYSCTLLLIILNIICVAPNSSN. Positions 37, 57, 60, and 61 each coordinate heme. Residues 286-306 traverse the membrane as a helical segment; sequence IKGMIVFFFASVLAQIFFVLK.

The protein belongs to the cytochrome f family. As to quaternary structure, the 4 large subunits of the cytochrome b6-f complex are cytochrome b6, subunit IV (17 kDa polypeptide, petD), cytochrome f and the Rieske protein, while the 4 small subunits are PetG, PetL, PetM and PetN. The complex functions as a dimer. The cofactor is heme.

It is found in the plastid. The protein resides in the chloroplast thylakoid membrane. Functionally, component of the cytochrome b6-f complex, which mediates electron transfer between photosystem II (PSII) and photosystem I (PSI), cyclic electron flow around PSI, and state transitions. The chain is Cytochrome f from Pyropia yezoensis (Susabi-nori).